Reading from the N-terminus, the 322-residue chain is MARDKIGLIGSGQIGGTLAHLIGLKELGDVVMFDIADGVPQGKSLDIAQSSPVEGFDARLAGTNSYEALEGAGVCIVTAGVPRKPGMSRDDLLGINLKVMEQVGAGIRKYAPDAFVICITNPLDAMVWALQKASGLPAKKVVGMAGVLDSSRFRYFLADEFNVSVEDVTAFVLGGHGDSMVPLVKYSTVAGIPLPDLVKMGWTSQARIDEIVDRTRNGGAEIVNLLKTGSAFYAPAASAIAMAESFLRDKKRVLPCAAYLNGEFGVYDMYVGVPVVIGAKGVERIVEIELAGRDREAFDRSVAAVQGLVDACKKIAPDLLDR.

NAD(+) is bound by residues Gly-10–Gly-15 and Asp-34. Positions 83 and 89 each coordinate substrate. Residues Asn-96 and Ile-119–Asn-121 each bind NAD(+). Asn-121 and Arg-152 together coordinate substrate. His-176 acts as the Proton acceptor in catalysis.

It belongs to the LDH/MDH superfamily. MDH type 3 family.

The enzyme catalyses (S)-malate + NAD(+) = oxaloacetate + NADH + H(+). In terms of biological role, catalyzes the reversible oxidation of malate to oxaloacetate. The sequence is that of Malate dehydrogenase from Nitrobacter winogradskyi (strain ATCC 25391 / DSM 10237 / CIP 104748 / NCIMB 11846 / Nb-255).